Consider the following 423-residue polypeptide: MVNHIRIFDNLFQSNISKFQNLTSKSYIIRNDNEKNSYLPMVQEIRELFGKEGEIFSKSIGTHPDFFGIENTNEYQYICSLFVDISGSTKLALKYSLDKVKLYKNAIISSAIEIFRAFDGHIHRIQGDAVLVYFGHKELEKSDAIINAINAASLMQYFNATTLKKFFESENLEPLKIRIGIDFGDDSSVLWSKYGIDGINEITSTSIHTDLASKFQNKAPSNKIMIGENINKYLDIPKKFRSIKIEKNNGVDVEKRYILNTNNLGRYSMEVFEWEKYLNSFSMLPPFSTENEQFYSPRDLKIRCWIIDEKNQDKYEYIERGSALKKEMNLLFKLEIYNQCLEFKNIKWRVVNYGEEAKKDKELEFEMNQYEGYQYCNQKTAYTGLHFMECYLYDINDKIICHDSFGLFINDNNREVRKLGIED.

The region spanning 79–184 is the Guanylate cyclase domain; it reads CSLFVDISGS…LKIRIGIDFG (106 aa). Position 82 (Phe-82) interacts with a ribonucleoside 5'-triphosphate. Residues Asp-84, Ile-85, and Asp-128 each contribute to the Mn(2+) site. Positions 290–409 are AGS-C domain; it reads ENEQFYSPRD…ICHDSFGLFI (120 aa).

This sequence belongs to the adenylyl cyclase class-4/guanylyl cyclase family. Pyrimidine cyclase subfamily. As to quaternary structure, homodimer. It depends on Mn(2+) as a cofactor.

The protein localises to the cytoplasm. It carries out the reaction CTP = 3',5'-cyclic CMP + diphosphate. Its function is as follows. Pycsar (pyrimidine cyclase system for antiphage resistance) provides immunity against bacteriophage. The pyrimidine cyclase (PycC) synthesizes cyclic nucleotides in response to infection; these serve as specific second messenger signals. The signal activates the adjacent effector, leading to bacterial cell death and abortive phage infection. A clade E Pycsar system. Functionally, the pyrimidine cyclase gene of a two-gene Pycsar system, weakly generates cyclic CMP (cCMP) from CTP, has little to no activity on ATP, GTP or UTP. Expression of this and adjacent effector SaPycTM (AC P0DV39) probably confers resistance to bacteriophage. The genes are probably only expressed in response to bacteriophage infection. The polypeptide is Cytidylate cyclase (Staphylococcus aureus).